Here is a 270-residue protein sequence, read N- to C-terminus: UPF0354 protein BC_4690 (270 aa).

This sequence belongs to the UPF0354 family.

The protein is UPF0354 protein BC_4690 of Bacillus cereus (strain ATCC 14579 / DSM 31 / CCUG 7414 / JCM 2152 / NBRC 15305 / NCIMB 9373 / NCTC 2599 / NRRL B-3711).